The following is a 147-amino-acid chain: Small ribosomal subunit protein uS12 (147 aa).

The protein belongs to the universal ribosomal protein uS12 family. In terms of assembly, part of the 30S ribosomal subunit.

With S4 and S5 plays an important role in translational accuracy. Located at the interface of the 30S and 50S subunits. This Pyrococcus abyssi (strain GE5 / Orsay) protein is Small ribosomal subunit protein uS12.